Reading from the N-terminus, the 139-residue chain is Nucleoside diphosphate kinase (139 aa).

Residues Lys10, Phe58, Arg86, Thr92, Arg104, and Asn114 each coordinate ATP. His117 (pros-phosphohistidine intermediate) is an active-site residue.

The protein belongs to the NDK family. In terms of assembly, homotetramer. Mg(2+) is required as a cofactor.

Its subcellular location is the cytoplasm. It carries out the reaction a 2'-deoxyribonucleoside 5'-diphosphate + ATP = a 2'-deoxyribonucleoside 5'-triphosphate + ADP. The catalysed reaction is a ribonucleoside 5'-diphosphate + ATP = a ribonucleoside 5'-triphosphate + ADP. Major role in the synthesis of nucleoside triphosphates other than ATP. The ATP gamma phosphate is transferred to the NDP beta phosphate via a ping-pong mechanism, using a phosphorylated active-site intermediate. The polypeptide is Nucleoside diphosphate kinase (Nocardia farcinica (strain IFM 10152)).